A 99-amino-acid chain; its full sequence is Co-chaperonin GroES (99 aa).

It belongs to the GroES chaperonin family. As to quaternary structure, heptamer of 7 subunits arranged in a ring. Interacts with the chaperonin GroEL.

The protein resides in the cytoplasm. Together with the chaperonin GroEL, plays an essential role in assisting protein folding. The GroEL-GroES system forms a nano-cage that allows encapsulation of the non-native substrate proteins and provides a physical environment optimized to promote and accelerate protein folding. GroES binds to the apical surface of the GroEL ring, thereby capping the opening of the GroEL channel. This chain is Co-chaperonin GroES, found in Corynebacterium glutamicum (strain R).